A 544-amino-acid chain; its full sequence is Probable protein kinase UbiB (544 aa).

The region spanning 123–501 (EFDIKPLASA…KRQQATGKFL (379 aa)) is the Protein kinase domain. Residues 129 to 137 (LASASIAQV) and K152 contribute to the ATP site. D287 serves as the catalytic Proton acceptor. The next 2 membrane-spanning stretches (helical) occupy residues 496–516 (ATGK…AILV) and 519–539 (AYEQ…LLSW).

The protein belongs to the ABC1 family. UbiB subfamily.

Its subcellular location is the cell inner membrane. It participates in cofactor biosynthesis; ubiquinone biosynthesis [regulation]. Its function is as follows. Is probably a protein kinase regulator of UbiI activity which is involved in aerobic coenzyme Q (ubiquinone) biosynthesis. The polypeptide is Probable protein kinase UbiB (Vibrio campbellii (strain ATCC BAA-1116)).